The sequence spans 216 residues: Orotate phosphoribosyltransferase (216 aa).

5-phospho-alpha-D-ribose 1-diphosphate-binding positions include R100, K104, H106, and 126–134 (EDLISTGGS). S130 contributes to the orotate binding site.

This sequence belongs to the purine/pyrimidine phosphoribosyltransferase family. PyrE subfamily. Homodimer. Interacts with BrxC. Mg(2+) is required as a cofactor.

The enzyme catalyses orotidine 5'-phosphate + diphosphate = orotate + 5-phospho-alpha-D-ribose 1-diphosphate. It participates in pyrimidine metabolism; UMP biosynthesis via de novo pathway; UMP from orotate: step 1/2. Functionally, catalyzes the transfer of a ribosyl phosphate group from 5-phosphoribose 1-diphosphate to orotate, leading to the formation of orotidine monophosphate (OMP). In Bacillus subtilis (strain 168), this protein is Orotate phosphoribosyltransferase.